Consider the following 131-residue polypeptide: Small ribosomal subunit protein uS8 (131 aa).

This sequence belongs to the universal ribosomal protein uS8 family. Part of the 30S ribosomal subunit. Contacts proteins S5 and S12.

Functionally, one of the primary rRNA binding proteins, it binds directly to 16S rRNA central domain where it helps coordinate assembly of the platform of the 30S subunit. The chain is Small ribosomal subunit protein uS8 from Ralstonia pickettii (strain 12J).